Reading from the N-terminus, the 264-residue chain is MPLPTMTHSSSFLRLPATSSPHPPPADDASAAYAVVVLNQRLPRFAPLLWDRARLRVCADGGANRVFDGMPELLPAEDPDQVRMRYKPDVIKGDMDSIRPEVKEYYSNLGAEIVDESHDQDTTDLHKCVSFITRNPPGSEESNLYILVLGALGGRFDHEMGNINVLYRFSNIRIVLLSDDCSIFLLPKTHSHEIHIERSIEGPHCGLIPMGSPSASTTTTGLRWNLDNTSMSYGGLISTSNIVEEETVRITSDSDLIWTISLRN.

Over residues 1–12 (MPLPTMTHSSSF) the composition is skewed to polar residues. The disordered stretch occupies residues 1–27 (MPLPTMTHSSSFLRLPATSSPHPPPAD).

It belongs to the thiamine pyrophosphokinase family.

It is found in the cytoplasm. It localises to the cytosol. It carries out the reaction thiamine + ATP = thiamine diphosphate + AMP + H(+). It functions in the pathway cofactor biosynthesis; thiamine diphosphate biosynthesis; thiamine diphosphate from thiamine: step 1/1. Catalyzes the phosphorylation of thiamine to thiamine pyrophosphate (TPP). TPP is an active cofactor for enzymes involved in glycolysis and energy production. Plant leaves require high levels of TPP for photosynthesis and carbohydrate metabolism. This Oryza sativa subsp. japonica (Rice) protein is Thiamine pyrophosphokinase 1 (TPK1).